The following is a 426-amino-acid chain: Histidine--tRNA ligase (426 aa).

It belongs to the class-II aminoacyl-tRNA synthetase family.

Its subcellular location is the cytoplasm. The enzyme catalyses tRNA(His) + L-histidine + ATP = L-histidyl-tRNA(His) + AMP + diphosphate + H(+). The polypeptide is Histidine--tRNA ligase (Saccharolobus islandicus (strain Y.G.57.14 / Yellowstone #1) (Sulfolobus islandicus)).